The following is a 341-amino-acid chain: NSRIAHVPKSKKPLNSASPRFHPTHQIIETKPSTLHRQEWGLKSSIPSKVQTRYIIFNDLDTLERLTTFEPNAGSQWSRLRFQELGVAPSYNAGKSNPLFEGSSSSSNQLVPLSSLLNIDPTSSRTDVEKKLSQVKSLRKVFKKWLLSKDPEALKNKSFSAKDMSDNAVEFLSESVGTNTGLNSASLNKVIGTGGLSYNIGGRLRQSPNGVVSKTVVPGRFLNVEGNDRLAAIGGFVANAGSSSPNTSQIDYNMGDFIRELKFPFAVNRAFVQDNGKVVLRANVISGMSSKARMQMSGKNYQQRPSRTTSPAVNPEDSTKYAEELLNILTNFDSGNGKKLR.

Positions 1–12 are enriched in basic residues; that stretch reads NSRIAHVPKSKK. Disordered regions lie at residues 1–21 and 291–317; these read NSRI…SPRF and KARM…NPED. Positions 297 to 312 are enriched in polar residues; the sequence is SGKNYQQRPSRTTSPA.

This is an uncharacterized protein from Lachancea kluyveri (strain ATCC 58438 / CBS 3082 / BCRC 21498 / NBRC 1685 / JCM 7257 / NCYC 543 / NRRL Y-12651) (Yeast).